We begin with the raw amino-acid sequence, 490 residues long: Serine/threonine-protein kinase PBL35 (490 aa).

Disordered stretches follow at residues 1 to 39 and 80 to 103; these read MGFDSVKVMENWQSKTSNENEKKKKKRRRKKNNNVRNSE and SAIVQSNDQPVGPVSSTTTTSNAE. Residues 14-39 adopt a coiled-coil conformation; that stretch reads SKTSNENEKKKKKRRRKKNNNVRNSE. Residues 23–33 show a composition bias toward basic residues; that stretch reads KKKKRRRKKNN. Residues 94–103 show a composition bias toward low complexity; sequence SSTTTTSNAE. A Protein kinase domain is found at 136 to 422; it reads FRPESLLGEG…VEVLKPLPHL (287 aa). Residues 142–150 and lysine 174 contribute to the ATP site; that span reads LGEGGFGCV. At tyrosine 219 the chain carries Phosphotyrosine. Residue aspartate 269 is the Proton acceptor of the active site. 2 positions are modified to phosphoserine: serine 273 and serine 303. 2 positions are modified to phosphothreonine: threonine 304 and threonine 309. Position 317 is a phosphotyrosine (tyrosine 317). The interval 442–490 is disordered; that stretch reads AGSGSGSGRGFGSRNGQPVFRTLSSPHGQAGSSPYRHQIPSPKPKGATT. The span at 444–454 shows a compositional bias: gly residues; it reads SGSGSGRGFGS. Residues 463 to 473 show a composition bias toward polar residues; sequence TLSSPHGQAGS.

The protein belongs to the protein kinase superfamily. Ser/Thr protein kinase family. As to quaternary structure, interacts with SD129. Phosphorylated by SD129 in response to the pathogen-associated molecular pattern (PAMP) 3-OH-C10:0, a medium-chain 3-hydroxy fatty acid.

The protein localises to the cell membrane. It carries out the reaction L-seryl-[protein] + ATP = O-phospho-L-seryl-[protein] + ADP + H(+). The enzyme catalyses L-threonyl-[protein] + ATP = O-phospho-L-threonyl-[protein] + ADP + H(+). In terms of biological role, involved in chitin-triggered immune signaling and is required for reactive oxygen species (ROS) production. Acts downstream of SD129 in defense signaling triggered by the pathogen-associated molecular pattern (PAMP) 3-OH-C10:0, a medium-chain 3-hydroxy fatty acid. This Arabidopsis thaliana (Mouse-ear cress) protein is Serine/threonine-protein kinase PBL35.